Reading from the N-terminus, the 446-residue chain is Glutamine synthetase (446 aa).

Residues Arg15–Gly102 enclose the GS beta-grasp domain. The 338-residue stretch at Pro109–Leu446 folds into the GS catalytic domain. Mg(2+) is bound by residues Glu132 and Glu134. Residue Glu184 participates in ATP binding. Glu189 and Glu196 together coordinate Mg(2+). L-glutamate is bound at residue Gly241. Residue His245 participates in Mg(2+) binding. Residues His247–Ser249 and Ser249 contribute to the ATP site. L-glutamate contacts are provided by Arg298, Glu304, and Arg316. 2 residues coordinate ATP: Arg316 and Arg321. Glu336 provides a ligand contact to Mg(2+). An L-glutamate-binding site is contributed by Arg338.

The protein belongs to the glutamine synthetase family. As to quaternary structure, oligomer of 12 subunits arranged in the form of two hexagons. In its feedback-inhibited form, interacts with TnrA in order to block its DNA-binding activity. Mg(2+) serves as cofactor.

It is found in the cytoplasm. The catalysed reaction is L-glutamate + NH4(+) + ATP = L-glutamine + ADP + phosphate + H(+). Its activity is regulated as follows. Inhibited by glutamine. In terms of biological role, glutamine synthetase (GS) is an unusual multitasking protein that functions as an enzyme, a transcription coregulator, and a chaperone in ammonium assimilation and in the regulation of genes involved in nitrogen metabolism. It catalyzes the ATP-dependent biosynthesis of glutamine from glutamate and ammonia. Feedback-inhibited GlnA also interacts with and regulates the activity of the transcriptional regulator TnrA. During nitrogen limitation, TnrA is in its DNA-binding active state and turns on the transcription of genes required for nitrogen assimilation. Under conditions of nitrogen excess, feedback-inhibited GlnA forms a stable complex with TnrA, which inhibits its DNA-binding activity. In contrast, feedback-inhibited GlnA acts as a chaperone to stabilize the DNA-binding activity of GlnR, which represses the transcription of nitrogen assimilation genes. In Mycobacterium bovis (strain ATCC BAA-935 / AF2122/97), this protein is Glutamine synthetase.